Here is a 131-residue protein sequence, read N- to C-terminus: Large ribosomal subunit protein bL12 (131 aa).

This sequence belongs to the bacterial ribosomal protein bL12 family. Homodimer. Part of the ribosomal stalk of the 50S ribosomal subunit. Forms a multimeric L10(L12)X complex, where L10 forms an elongated spine to which 2 to 4 L12 dimers bind in a sequential fashion. Binds GTP-bound translation factors.

Functionally, forms part of the ribosomal stalk which helps the ribosome interact with GTP-bound translation factors. Is thus essential for accurate translation. The polypeptide is Large ribosomal subunit protein bL12 (Prochlorococcus marinus (strain MIT 9313)).